We begin with the raw amino-acid sequence, 216 residues long: Probable transaldolase (216 aa).

The Schiff-base intermediate with substrate role is filled by K83.

Belongs to the transaldolase family. Type 3B subfamily.

The protein resides in the cytoplasm. It carries out the reaction D-sedoheptulose 7-phosphate + D-glyceraldehyde 3-phosphate = D-erythrose 4-phosphate + beta-D-fructose 6-phosphate. The protein operates within carbohydrate degradation; pentose phosphate pathway; D-glyceraldehyde 3-phosphate and beta-D-fructose 6-phosphate from D-ribose 5-phosphate and D-xylulose 5-phosphate (non-oxidative stage): step 2/3. Its function is as follows. Transaldolase is important for the balance of metabolites in the pentose-phosphate pathway. The polypeptide is Probable transaldolase (Methanococcus aeolicus (strain ATCC BAA-1280 / DSM 17508 / OCM 812 / Nankai-3)).